Reading from the N-terminus, the 1125-residue chain is tRNA (34-2'-O)-methyltransferase regulator WDR6 (1125 aa).

At M1 the chain carries N-acetylmethionine. 17 WD repeats span residues 89–130 (SKGL…GNVA), 155–197 (TDRC…PDNK), 207–246 (GHVG…VPGG), 256–294 (GHSA…QAFR), 295–335 (GHQG…YPGL), 346–384 (SRPG…WEQL), 433–475 (LFQG…TGKA), 489–528 (SKQR…FKKP), 567–605 (HGKQ…QPVL), 611–650 (RGMN…KLHI), 652–692 (NCGG…IRPN), 725–765 (EHPD…GAAH), 767–798 (LTAV…HPGL), 860–905 (TRYM…RILH), 912–958 (HHKR…DRGS), 982–1024 (AHSC…PELE), and 1047–1085 (AHAA…PTFM).

It belongs to the WD repeat WDR6 family. As to quaternary structure, interacts with FTSJ1; the interaction is direct, and required for 2'-O-methylation of position 34 in substrate tRNAs. Interacts with IRS4. Interacts with STK11/LKB1. In terms of tissue distribution, expressed in hypothalamus, hippocampus, cerebrum cortex and cerebellum.

Its subcellular location is the cytoplasm. In terms of biological role, together with methyltransferase FTSJ1, methylates the 2'-O-ribose of nucleotides at position 34 of the tRNA anticodon loop of substrate tRNAs. Required for the correct positioning of the substrate tRNA for methylation. Required to suppress amino acid starvation-induced autophagy. Enhances the STK11/LKB1-induced cell growth suppression activity. This chain is tRNA (34-2'-O)-methyltransferase regulator WDR6 (Wdr6), found in Rattus norvegicus (Rat).